Here is a 706-residue protein sequence, read N- to C-terminus: Serine/threonine-protein kinase BUR1 (706 aa).

The 302-residue stretch at 38 to 339 (YKPLGKIGEG…AIGGKNHAYF (302 aa)) folds into the Protein kinase domain. Residues 44-52 (IGEGTFGEV) and Lys67 contribute to the ATP site. Residue Asp168 is the Proton acceptor of the active site. 3 stretches are compositionally biased toward basic and acidic residues: residues 360–523 (LDNH…RDSR), 545–570 (DYDR…DMTR), and 594–623 (DKVE…KSRD). Residues 360 to 706 (LDNHKRREQE…YGRKRPRIER (347 aa)) form a disordered region. Residues 625-648 (GPPPGPPLPADGPPPPPSSNPPRP) are compositionally biased toward pro residues. The segment covering 659–706 (WRRDSRDRRESRDRDGRDRDGRDRRLSSSRYARDEFDEYGRKRPRIER) has biased composition (basic and acidic residues).

This sequence belongs to the protein kinase superfamily. CMGC Ser/Thr protein kinase family. CDC2/CDKX subfamily.

The protein localises to the nucleus. The catalysed reaction is L-seryl-[protein] + ATP = O-phospho-L-seryl-[protein] + ADP + H(+). It carries out the reaction L-threonyl-[protein] + ATP = O-phospho-L-threonyl-[protein] + ADP + H(+). It catalyses the reaction [DNA-directed RNA polymerase] + ATP = phospho-[DNA-directed RNA polymerase] + ADP + H(+). In terms of biological role, serine/threonine-protein kinase involved in transcription regulation. Phosphorylates the UBC2/RAD6 ubiquitin-conjugating enzyme (E2), leading to monoubiquitination of histone H2B and the silencing of telomeric-associated genes. Also required for histone H3 methylation. Necessary for the recovery from pheromone-induced growth arrest in the cell cycle G1 phase. In Yarrowia lipolytica (strain CLIB 122 / E 150) (Yeast), this protein is Serine/threonine-protein kinase BUR1 (BUR1).